The following is a 290-amino-acid chain: 2-dehydropantoate 2-reductase (290 aa).

NADP(+) contacts are provided by residues 8-13, Asn-98, and Ala-124; that span reads GPGAVG. Asn-98 lines the substrate pocket. Lys-175 functions as the Proton donor in the catalytic mechanism. Residues Asn-179 and Ser-244 each contribute to the substrate site. Glu-256 contacts NADP(+).

The protein belongs to the ketopantoate reductase family.

The protein localises to the cytoplasm. It catalyses the reaction (R)-pantoate + NADP(+) = 2-dehydropantoate + NADPH + H(+). The protein operates within cofactor biosynthesis; (R)-pantothenate biosynthesis; (R)-pantoate from 3-methyl-2-oxobutanoate: step 2/2. In terms of biological role, catalyzes the NADPH-dependent reduction of ketopantoate into pantoic acid. This chain is 2-dehydropantoate 2-reductase, found in Caulobacter vibrioides (strain ATCC 19089 / CIP 103742 / CB 15) (Caulobacter crescentus).